The primary structure comprises 115 residues: Anamorsin homolog 2 (115 aa).

The tract at residues 30 to 115 is disordered; sequence VKEATKGEDC…KVKLNLTDDI (86 aa). Residues Cys39, Cys46, Cys49, and Cys51 each coordinate [2Fe-2S] cluster. The tract at residues 39-51 is fe-S binding site A; sequence CTTRRRACKNCTC. Residues Cys77, Cys80, Cys88, and Cys91 each contribute to the [4Fe-4S] cluster site. 2 consecutive short sequence motifs (cx2C motif) follow at residues 77-80 and 88-91; these read CGNC and CATC. The fe-S binding site B stretch occupies residues 77–91; it reads CGNCAKGDAFRCATC.

This sequence belongs to the anamorsin family. In terms of assembly, monomer. It depends on [2Fe-2S] cluster as a cofactor. [4Fe-4S] cluster is required as a cofactor.

It is found in the cytoplasm. It localises to the mitochondrion intermembrane space. In terms of biological role, component of the cytosolic iron-sulfur (Fe-S) protein assembly (CIA) machinery. Required for the maturation of extramitochondrial Fe-S proteins. Part of an electron transfer chain functioning in an early step of cytosolic Fe-S biogenesis, facilitating the de novo assembly of a [4Fe-4S] cluster on the cytosolic Fe-S scaffold complex. Electrons are transferred from NADPH via a FAD- and FMN-containing diflavin oxidoreductase. Together with the diflavin oxidoreductase, also required for the assembly of the diferric tyrosyl radical cofactor of ribonucleotide reductase (RNR), probably by providing electrons for reduction during radical cofactor maturation in the catalytic small subunit. This Trypanosoma cruzi (strain CL Brener) protein is Anamorsin homolog 2.